The sequence spans 297 residues: Ribosomal RNA small subunit methyltransferase A (297 aa).

Asn-31, Leu-33, Gly-58, Glu-79, Asp-104, and Asn-129 together coordinate S-adenosyl-L-methionine.

This sequence belongs to the class I-like SAM-binding methyltransferase superfamily. rRNA adenine N(6)-methyltransferase family. RsmA subfamily.

Its subcellular location is the cytoplasm. It carries out the reaction adenosine(1518)/adenosine(1519) in 16S rRNA + 4 S-adenosyl-L-methionine = N(6)-dimethyladenosine(1518)/N(6)-dimethyladenosine(1519) in 16S rRNA + 4 S-adenosyl-L-homocysteine + 4 H(+). Its function is as follows. Specifically dimethylates two adjacent adenosines (A1518 and A1519) in the loop of a conserved hairpin near the 3'-end of 16S rRNA in the 30S particle. May play a critical role in biogenesis of 30S subunits. This Staphylococcus aureus (strain bovine RF122 / ET3-1) protein is Ribosomal RNA small subunit methyltransferase A.